The following is a 1122-amino-acid chain: Phytochrome A (1122 aa).

Residues Met1–Glu11 are compositionally biased toward polar residues. Residues Met1 to Arg21 are disordered. Residues Ser218 to Val402 enclose the GAF domain. Cys323 is a phytochromobilin binding site. In terms of domain architecture, PAS 1 spans Val618–Thr688. One can recognise a PAC domain in the interval Phe695 to Arg747. Residues Ile748 to Gly822 enclose the PAS 2 domain. One can recognise a Histidine kinase domain in the interval Tyr902 to Ala1119.

Belongs to the phytochrome family. As to quaternary structure, homodimer. Interacts with NDPK2 and PKS4. Stabilized by interactions with PAPP5 and FYPP3 which are enhanced in the phosphorylated Pfr form. Interacts with COP1/SPA1 complex. Binds, via its photosensory domain, to PTAC12/HMR when photoactivated; this interaction stimulates its localization to photobodies. Interacts with FHY1, FHL and FHY3, especially upon far-red (FR) light illumination; when underphosphorylated. Forms PHYA/FHY1/HFR1 complex. Binds to PIF3/PAP3. In terms of processing, phosphorylated. Post-translationally, contains one covalently linked phytochromobilin chromophore. In terms of tissue distribution, expressed in fruits, flowers, leaves, stems, seedlings and roots.

Its subcellular location is the cytoplasm. The protein localises to the nucleus. It localises to the nucleoplasm. The protein resides in the nucleus speckle. In terms of biological role, regulatory photoreceptor which exists in two forms that are reversibly interconvertible by light: the Pr form that absorbs maximally in the red region of the spectrum and the Pfr form that absorbs maximally in the far-red region. Photoconversion of Pr to Pfr induces an array of morphogenetic responses, whereas reconversion of Pfr to Pr cancels the induction of those responses. Pfr controls the expression of a number of nuclear genes including those encoding the small subunit of ribulose-bisphosphate carboxylase, chlorophyll A/B binding protein, protochlorophyllide reductase, rRNA, etc. It also controls the expression of its own gene(s) in a negative feedback fashion. Involved in the flowering time regulation. Can phosphorylate FHY1 and, possibly, FHL, in red light conditions; this inactivates their co-shuttling to the nucleus. Regulates phototropic responses both in the nucleus (e.g. hypocotyl elongation and cotyledon opening under high-irradiance conditions and seed germination under very-low-fluence conditions) and in the cytoplasm (e.g. negative gravitropism in blue light and red-enhanced phototropism). Promotes seed germination, suppression of hypocotyl elongation, and randomization of hypocotyl growth orientation in far-red light; these responses to far-red light are repressed by UNE10/PIF8. Stabilizes UNE10/PIF8 but sequesters PIF3/PAP3 from its target genes promoters in far-red light. This chain is Phytochrome A, found in Arabidopsis thaliana (Mouse-ear cress).